The following is a 338-amino-acid chain: Glyceraldehyde-3-phosphate dehydrogenase (338 aa).

Residues 12–13 (RI), D38, and S125 contribute to the NAD(+) site. Residues 155-157 (SCT), T186, 216-217 (TG), and R239 each bind D-glyceraldehyde 3-phosphate. The active-site Nucleophile is C156. N320 contacts NAD(+).

This sequence belongs to the glyceraldehyde-3-phosphate dehydrogenase family. As to quaternary structure, homotetramer.

Its subcellular location is the cytoplasm. It carries out the reaction D-glyceraldehyde 3-phosphate + phosphate + NAD(+) = (2R)-3-phospho-glyceroyl phosphate + NADH + H(+). It functions in the pathway carbohydrate degradation; glycolysis; pyruvate from D-glyceraldehyde 3-phosphate: step 1/5. Functionally, catalyzes the oxidative phosphorylation of glyceraldehyde 3-phosphate (G3P) to 1,3-bisphosphoglycerate (BPG) using the cofactor NAD. The first reaction step involves the formation of a hemiacetal intermediate between G3P and a cysteine residue, and this hemiacetal intermediate is then oxidized to a thioester, with concomitant reduction of NAD to NADH. The reduced NADH is then exchanged with the second NAD, and the thioester is attacked by a nucleophilic inorganic phosphate to produce BPG. The protein is Glyceraldehyde-3-phosphate dehydrogenase (gap) of Lactobacillus delbrueckii subsp. bulgaricus.